Here is a 256-residue protein sequence, read N- to C-terminus: Imidazole glycerol phosphate synthase subunit HisF (256 aa).

Active-site residues include D12 and D131.

Belongs to the HisA/HisF family. In terms of assembly, heterodimer of HisH and HisF.

It localises to the cytoplasm. The catalysed reaction is 5-[(5-phospho-1-deoxy-D-ribulos-1-ylimino)methylamino]-1-(5-phospho-beta-D-ribosyl)imidazole-4-carboxamide + L-glutamine = D-erythro-1-(imidazol-4-yl)glycerol 3-phosphate + 5-amino-1-(5-phospho-beta-D-ribosyl)imidazole-4-carboxamide + L-glutamate + H(+). Its pathway is amino-acid biosynthesis; L-histidine biosynthesis; L-histidine from 5-phospho-alpha-D-ribose 1-diphosphate: step 5/9. In terms of biological role, IGPS catalyzes the conversion of PRFAR and glutamine to IGP, AICAR and glutamate. The HisF subunit catalyzes the cyclization activity that produces IGP and AICAR from PRFAR using the ammonia provided by the HisH subunit. The polypeptide is Imidazole glycerol phosphate synthase subunit HisF (Pseudomonas putida (strain ATCC 700007 / DSM 6899 / JCM 31910 / BCRC 17059 / LMG 24140 / F1)).